A 61-amino-acid chain; its full sequence is Protein TfaX (61 aa).

The protein belongs to the tfa family.

Might play a role in cell growth during glycolysis. The protein is Protein TfaX (tfaX) of Escherichia coli (strain K12).